Here is a 631-residue protein sequence, read N- to C-terminus: Dolichyl-diphosphooligosaccharide--protein glycosyltransferase subunit 2 (631 aa).

The N-terminal stretch at 1–22 (MASPGASTVFLLALTILAGTQA) is a signal peptide. Over 23-540 (LTPTHYLTKP…REPEKRPPTV (518 aa)) the chain is Lumenal. N-linked (GlcNAc...) asparagine glycosylation occurs at N106. Residue K154 forms a Glycyl lysine isopeptide (Lys-Gly) (interchain with G-Cter in ubiquitin) linkage. The chain crosses the membrane as a helical span at residues 541–561 (VSNTFTALILSPLLLLFALWI). Residues 562–571 (RIGANVSNFT) are Cytoplasmic-facing. The chain crosses the membrane as a helical span at residues 572–592 (FAPSTIIFHLGHAAMLGLMYV). Residues 593–596 (YWTQ) lie on the Lumenal side of the membrane. Residues 597 to 617 (LNMFQTLKYLAILGSVTFLAG) form a helical membrane-spanning segment. Topologically, residues 618–631 (NRMLAQQAIKRTAH) are cytoplasmic.

It belongs to the SWP1 family. In terms of assembly, component of the oligosaccharyltransferase (OST) complex. OST exists in two different complex forms which contain common core subunits RPN1, RPN2, OST48, OST4, DAD1 and TMEM258, either STT3A or STT3B as catalytic subunits, and form-specific accessory subunits. STT3A complex assembly occurs through the formation of 3 subcomplexes. Subcomplex 1 contains RPN1 and TMEM258, subcomplex 2 contains the STT3A-specific subunits STT3A, DC2/OSTC, and KCP2 as well as the core subunit OST4, and subcomplex 3 contains RPN2, DAD1, and OST48. The STT3A complex can form stable complexes with the Sec61 complex or with both the Sec61 and TRAP complexes. Interacts with DDI2. Interacts with TMEM35A/NACHO.

The protein resides in the endoplasmic reticulum. It is found in the endoplasmic reticulum membrane. The protein operates within protein modification; protein glycosylation. Functionally, subunit of the oligosaccharyl transferase (OST) complex that catalyzes the initial transfer of a defined glycan (Glc(3)Man(9)GlcNAc(2) in eukaryotes) from the lipid carrier dolichol-pyrophosphate to an asparagine residue within an Asn-X-Ser/Thr consensus motif in nascent polypeptide chains, the first step in protein N-glycosylation. N-glycosylation occurs cotranslationally and the complex associates with the Sec61 complex at the channel-forming translocon complex that mediates protein translocation across the endoplasmic reticulum (ER). All subunits are required for a maximal enzyme activity. This chain is Dolichyl-diphosphooligosaccharide--protein glycosyltransferase subunit 2, found in Canis lupus familiaris (Dog).